Consider the following 401-residue polypeptide: 8-amino-7-oxononanoate synthase (401 aa).

Arg-19 lines the substrate pocket. 106–107 (GY) is a pyridoxal 5'-phosphate binding site. His-131 is a binding site for substrate. Pyridoxal 5'-phosphate-binding residues include Ser-176, His-204, and Thr-233. The residue at position 236 (Lys-236) is an N6-(pyridoxal phosphate)lysine. A substrate-binding site is contributed by Thr-350.

This sequence belongs to the class-II pyridoxal-phosphate-dependent aminotransferase family. BioF subfamily. As to quaternary structure, homodimer. It depends on pyridoxal 5'-phosphate as a cofactor.

The enzyme catalyses 6-carboxyhexanoyl-[ACP] + L-alanine + H(+) = (8S)-8-amino-7-oxononanoate + holo-[ACP] + CO2. It functions in the pathway cofactor biosynthesis; biotin biosynthesis. Catalyzes the decarboxylative condensation of pimeloyl-[acyl-carrier protein] and L-alanine to produce 8-amino-7-oxononanoate (AON), [acyl-carrier protein], and carbon dioxide. In Pseudomonas aeruginosa (strain LESB58), this protein is 8-amino-7-oxononanoate synthase.